Here is a 309-residue protein sequence, read N- to C-terminus: Coenzyme PQQ synthesis protein B (309 aa).

The protein belongs to the PqqB family.

It functions in the pathway cofactor biosynthesis; pyrroloquinoline quinone biosynthesis. May be involved in the transport of PQQ or its precursor to the periplasm. The chain is Coenzyme PQQ synthesis protein B from Bradyrhizobium diazoefficiens (strain JCM 10833 / BCRC 13528 / IAM 13628 / NBRC 14792 / USDA 110).